The primary structure comprises 691 residues: Threonine--tRNA ligase (691 aa).

One can recognise a TGS domain in the interval 1 to 69 (MSTPEITPAA…QQDVEVAAVP (69 aa)). Positions 268-574 (DHRRLGQELD…LLEHYAGAFP (307 aa)) are catalytic. Cys-373, His-424, and His-551 together coordinate Zn(2+).

It belongs to the class-II aminoacyl-tRNA synthetase family. Homodimer. Zn(2+) is required as a cofactor.

It localises to the cytoplasm. The catalysed reaction is tRNA(Thr) + L-threonine + ATP = L-threonyl-tRNA(Thr) + AMP + diphosphate + H(+). Functionally, catalyzes the attachment of threonine to tRNA(Thr) in a two-step reaction: L-threonine is first activated by ATP to form Thr-AMP and then transferred to the acceptor end of tRNA(Thr). Also edits incorrectly charged L-seryl-tRNA(Thr). This is Threonine--tRNA ligase from Corynebacterium jeikeium (strain K411).